A 93-amino-acid polypeptide reads, in one-letter code: Small ribosomal subunit protein uS17 (93 aa).

This sequence belongs to the universal ribosomal protein uS17 family. As to quaternary structure, part of the 30S ribosomal subunit.

One of the primary rRNA binding proteins, it binds specifically to the 5'-end of 16S ribosomal RNA. The chain is Small ribosomal subunit protein uS17 from Rhodococcus erythropolis (strain PR4 / NBRC 100887).